The primary structure comprises 155 residues: Endoribonuclease YbeY (155 aa).

Zn(2+) is bound by residues histidine 117, histidine 121, and histidine 127.

It belongs to the endoribonuclease YbeY family. The cofactor is Zn(2+).

It is found in the cytoplasm. Functionally, single strand-specific metallo-endoribonuclease involved in late-stage 70S ribosome quality control and in maturation of the 3' terminus of the 16S rRNA. This chain is Endoribonuclease YbeY, found in Dichelobacter nodosus (strain VCS1703A).